The primary structure comprises 123 residues: Fluoride-specific ion channel FluC (123 aa).

4 consecutive transmembrane segments (helical) span residues 5–25, 33–53, 62–82, and 94–114; these read VWVA…YKFV, LATF…IGAF, LKLA…TFAA, and ITAF…VALG. Positions 72 and 75 each coordinate Na(+).

This sequence belongs to the fluoride channel Fluc/FEX (TC 1.A.43) family.

It localises to the cell inner membrane. The catalysed reaction is fluoride(in) = fluoride(out). With respect to regulation, na(+) is not transported, but it plays an essential structural role and its presence is essential for fluoride channel function. Functionally, fluoride-specific ion channel. Important for reducing fluoride concentration in the cell, thus reducing its toxicity. The polypeptide is Fluoride-specific ion channel FluC (Ignicoccus hospitalis (strain KIN4/I / DSM 18386 / JCM 14125)).